Consider the following 759-residue polypeptide: 5-methyltetrahydropteroyltriglutamate--homocysteine methyltransferase (759 aa).

The segment covering 1–16 (MTQPVRRQPFTATITG) has biased composition (polar residues). The interval 1-22 (MTQPVRRQPFTATITGSPRIGP) is disordered. 5-methyltetrahydropteroyltri-L-glutamate contacts are provided by residues 24 to 27 (RELK) and lysine 118. L-homocysteine-binding positions include 437-439 (IGS) and glutamate 490. L-methionine-binding positions include 437 to 439 (IGS) and glutamate 490. 5-methyltetrahydropteroyltri-L-glutamate is bound by residues 521 to 522 (RC) and tryptophan 567. Aspartate 605 contributes to the L-homocysteine binding site. Aspartate 605 is an L-methionine binding site. 5-methyltetrahydropteroyltri-L-glutamate is bound at residue glutamate 611. Histidine 647, cysteine 649, and glutamate 671 together coordinate Zn(2+). Histidine 700 acts as the Proton donor in catalysis. Cysteine 732 provides a ligand contact to Zn(2+).

It belongs to the vitamin-B12 independent methionine synthase family. Requires Zn(2+) as cofactor.

The catalysed reaction is 5-methyltetrahydropteroyltri-L-glutamate + L-homocysteine = tetrahydropteroyltri-L-glutamate + L-methionine. It participates in amino-acid biosynthesis; L-methionine biosynthesis via de novo pathway; L-methionine from L-homocysteine (MetE route): step 1/1. In terms of biological role, catalyzes the transfer of a methyl group from 5-methyltetrahydrofolate to homocysteine resulting in methionine formation. This chain is 5-methyltetrahydropteroyltriglutamate--homocysteine methyltransferase, found in Mycobacterium tuberculosis (strain ATCC 25177 / H37Ra).